An 896-amino-acid polypeptide reads, in one-letter code: Valine--tRNA ligase (896 aa).

The 'HIGH' region motif lies at 48-58; the sequence is PNVTGSLHMGH. A 'KMSKS' region motif is present at residues 543-547; that stretch reads KMSKS. K546 lines the ATP pocket. Residues 830–896 adopt a coiled-coil conformation; that stretch reads VIDLDAERTR…ARLGAALERL (67 aa).

This sequence belongs to the class-I aminoacyl-tRNA synthetase family. ValS type 1 subfamily. As to quaternary structure, monomer.

It is found in the cytoplasm. The enzyme catalyses tRNA(Val) + L-valine + ATP = L-valyl-tRNA(Val) + AMP + diphosphate. Catalyzes the attachment of valine to tRNA(Val). As ValRS can inadvertently accommodate and process structurally similar amino acids such as threonine, to avoid such errors, it has a 'posttransfer' editing activity that hydrolyzes mischarged Thr-tRNA(Val) in a tRNA-dependent manner. This Granulibacter bethesdensis (strain ATCC BAA-1260 / CGDNIH1) protein is Valine--tRNA ligase.